The primary structure comprises 206 residues: N-(5'-phosphoribosyl)anthranilate isomerase (206 aa).

This sequence belongs to the TrpF family.

The enzyme catalyses N-(5-phospho-beta-D-ribosyl)anthranilate = 1-(2-carboxyphenylamino)-1-deoxy-D-ribulose 5-phosphate. It participates in amino-acid biosynthesis; L-tryptophan biosynthesis; L-tryptophan from chorismate: step 3/5. The polypeptide is N-(5'-phosphoribosyl)anthranilate isomerase (Rubrobacter xylanophilus (strain DSM 9941 / JCM 11954 / NBRC 16129 / PRD-1)).